A 550-amino-acid polypeptide reads, in one-letter code: Kinase suppressor of Ras B (550 aa).

Low complexity-rich tracts occupy residues 21–56 and 63–75; these read SFSS…SNPI and ATSS…STSS. The disordered stretch occupies residues 21 to 87; it reads SFSSWRRSST…PPPASAPPRI (67 aa). Residues 90 to 145 form a Phorbol-ester/DAG-type zinc finger; that stretch reads YHKMVPSKSKFRQCDVCEHIFIFDFVRKQHLDDVYACNVCGIRVHKGCLDRVKNDC. The segment at 172 to 196 is disordered; it reads TTASISKSLTTSPTCSTSTTMSPAG. Positions 177 to 193 are enriched in low complexity; it reads SKSLTTSPTCSTSTTMS. The Protein kinase domain occupies 248–528; it reads VDVMTKIGDG…FQQIVKRITV (281 aa). The interval 530–550 is disordered; that stretch reads MPRKESNKQKRRSTAHENPLF.

Belongs to the protein kinase superfamily. TKL Ser/Thr protein kinase family. In terms of assembly, interacts with ndk-1.

Its function is as follows. Probable inactive protein kinase which positively regulates Ras-mediated signaling probably acting at the level of let-60/ras or/and lin-45/raf. In the germline, regulates meiotic progression during oogenesis and mpk-1 (isoform b) phosphorylation. Plays a role in meiotic recombination events. Functions redundantly with ksr-1 in the Ras-mediated regulation of larval survival, the development of excretory canal, in determining vulval precursor cell fate during vulval induction and in mpk-1 phosphorylation in somatic cells. The sequence is that of Kinase suppressor of Ras B from Caenorhabditis elegans.